The following is a 437-amino-acid chain: O-methyltransferase 3 (437 aa).

Residues Met1 to Arg21 form a disordered region. A coiled-coil region spans residues Ser146–Leu180. Residues Asp408–Asn437 form a disordered region. The span at Asn411–Asn437 shows a compositional bias: low complexity.

This sequence belongs to the methyltransferase superfamily. METL family.

Functionally, probable methyltransferase. This chain is O-methyltransferase 3 (omt3), found in Dictyostelium discoideum (Social amoeba).